The following is a 303-amino-acid chain: ATP synthase gamma chain (303 aa).

It belongs to the ATPase gamma chain family. In terms of assembly, F-type ATPases have 2 components, CF(1) - the catalytic core - and CF(0) - the membrane proton channel. CF(1) has five subunits: alpha(3), beta(3), gamma(1), delta(1), epsilon(1). CF(0) has three main subunits: a, b and c.

It is found in the cell inner membrane. In terms of biological role, produces ATP from ADP in the presence of a proton gradient across the membrane. The gamma chain is believed to be important in regulating ATPase activity and the flow of protons through the CF(0) complex. This Bartonella quintana (strain Toulouse) (Rochalimaea quintana) protein is ATP synthase gamma chain.